The primary structure comprises 321 residues: Porphobilinogen deaminase (321 aa).

The residue at position 246 (Cys246) is an S-(dipyrrolylmethanemethyl)cysteine.

This sequence belongs to the HMBS family. As to quaternary structure, monomer. Requires dipyrromethane as cofactor.

It catalyses the reaction 4 porphobilinogen + H2O = hydroxymethylbilane + 4 NH4(+). It participates in porphyrin-containing compound metabolism; protoporphyrin-IX biosynthesis; coproporphyrinogen-III from 5-aminolevulinate: step 2/4. In terms of biological role, tetrapolymerization of the monopyrrole PBG into the hydroxymethylbilane pre-uroporphyrinogen in several discrete steps. In Helicobacter hepaticus (strain ATCC 51449 / 3B1), this protein is Porphobilinogen deaminase.